The sequence spans 397 residues: Tryptophan synthase beta chain (397 aa).

Lysine 87 is subject to N6-(pyridoxal phosphate)lysine.

Belongs to the TrpB family. In terms of assembly, tetramer of two alpha and two beta chains. It depends on pyridoxal 5'-phosphate as a cofactor.

The enzyme catalyses (1S,2R)-1-C-(indol-3-yl)glycerol 3-phosphate + L-serine = D-glyceraldehyde 3-phosphate + L-tryptophan + H2O. It participates in amino-acid biosynthesis; L-tryptophan biosynthesis; L-tryptophan from chorismate: step 5/5. Its function is as follows. The beta subunit is responsible for the synthesis of L-tryptophan from indole and L-serine. This Escherichia coli O157:H7 protein is Tryptophan synthase beta chain.